A 448-amino-acid chain; its full sequence is Adenylosuccinate synthetase (448 aa).

Residues 22-28 and 50-52 each bind GTP; these read GDEGKGK and GHT. Asp-23 (proton acceptor) is an active-site residue. Mg(2+)-binding residues include Asp-23 and Gly-50. Residues 23–26, 48–51, Thr-139, Arg-153, Gln-234, Thr-249, and Arg-321 contribute to the IMP site; these read DEGK and NAGH. His-51 functions as the Proton donor in the catalytic mechanism. 317 to 323 contacts substrate; that stretch reads SVTGRPR. GTP contacts are provided by residues Arg-323, 349 to 351, and 431 to 433; these read KLD and STG.

It belongs to the adenylosuccinate synthetase family. As to quaternary structure, homodimer. Requires Mg(2+) as cofactor.

It is found in the cytoplasm. The catalysed reaction is IMP + L-aspartate + GTP = N(6)-(1,2-dicarboxyethyl)-AMP + GDP + phosphate + 2 H(+). It functions in the pathway purine metabolism; AMP biosynthesis via de novo pathway; AMP from IMP: step 1/2. Its function is as follows. Plays an important role in the de novo pathway of purine nucleotide biosynthesis. Catalyzes the first committed step in the biosynthesis of AMP from IMP. This chain is Adenylosuccinate synthetase, found in Burkholderia thailandensis (strain ATCC 700388 / DSM 13276 / CCUG 48851 / CIP 106301 / E264).